The following is an 899-amino-acid chain: Probable dipeptidyl-aminopeptidase B (899 aa).

The tract at residues 1–69 is disordered; that stretch reads MKLDRMRVGS…NHNGRTQGNY (69 aa). The Cytoplasmic segment spans residues 1-99; the sequence is MKLDRMRVGS…NGKSSQRRTL (99 aa). Low complexity predominate over residues 32 to 43; the sequence is DSSSTASISLTL. Residues 100–120 traverse the membrane as a helical; Signal-anchor for type II membrane protein segment; the sequence is IVFWLLVALCVGGWAVAFLFF. At 121 to 899 the chain is on the vacuolar side; that stretch reads VTSPGNKTST…KYFNLSFLGH (779 aa). The segment covering 128-139 has biased composition (polar residues); that stretch reads TSTSPHSGSNSP. The segment at 128–149 is disordered; sequence TSTSPHSGSNSPEGDVTKPGIP. Residues asparagine 212, asparagine 308, and asparagine 360 are each glycosylated (N-linked (GlcNAc...) asparagine). The Charge relay system role is filled by serine 765. Asparagine 819, asparagine 824, and asparagine 827 each carry an N-linked (GlcNAc...) asparagine glycan. Residues aspartate 842 and histidine 875 each act as charge relay system in the active site. Asparagine 893 carries an N-linked (GlcNAc...) asparagine glycan.

It belongs to the peptidase S9B family.

The protein resides in the vacuole membrane. It carries out the reaction Release of an N-terminal dipeptide, Xaa-Yaa-|-Zaa-, from a polypeptide, preferentially when Yaa is Pro, provided Zaa is neither Pro nor hydroxyproline.. In terms of biological role, type IV dipeptidyl-peptidase which removes N-terminal dipeptides sequentially from polypeptides having unsubstituted N-termini provided that the penultimate residue is proline. The chain is Probable dipeptidyl-aminopeptidase B (DAPB) from Trichophyton verrucosum (strain HKI 0517).